The sequence spans 150 residues: Macrodomain Ter protein (150 aa).

The protein belongs to the MatP family. In terms of assembly, homodimer.

It localises to the cytoplasm. Its function is as follows. Required for spatial organization of the terminus region of the chromosome (Ter macrodomain) during the cell cycle. Prevents early segregation of duplicated Ter macrodomains during cell division. Binds specifically to matS, which is a 13 bp signature motif repeated within the Ter macrodomain. In Salmonella typhi, this protein is Macrodomain Ter protein.